Reading from the N-terminus, the 288-residue chain is UTP--glucose-1-phosphate uridylyltransferase (288 aa).

The protein belongs to the UDPGP type 2 family.

It catalyses the reaction alpha-D-glucose 1-phosphate + UTP + H(+) = UDP-alpha-D-glucose + diphosphate. It functions in the pathway glycolipid metabolism; diglucosyl-diacylglycerol biosynthesis. Catalyzes the formation of UDP-glucose from glucose-1-phosphate and UTP. This is an intermediate step in the biosynthesis of diglucosyl-diacylglycerol (Glc2-DAG), i.e. a glycolipid found in the membrane, which is also used as a membrane anchor for lipoteichoic acid (LTA). In Staphylococcus haemolyticus (strain JCSC1435), this protein is UTP--glucose-1-phosphate uridylyltransferase (gtaB).